The primary structure comprises 360 residues: Serine/threonine transporter SstT (360 aa).

Transmembrane regions (helical) follow at residues 17 to 37 (IGIG…ITVI), 40 to 60 (FGSL…LTLV), 78 to 98 (VICL…GASY), 138 to 158 (ALAT…GLAF), 179 to 199 (VVGW…FDTI), 212 to 232 (LLLL…NPLI), 295 to 315 (MAGA…TLGI), 316 to 336 (SVDF…AAGA), and 339 to 359 (VAGG…VPYV).

The protein belongs to the dicarboxylate/amino acid:cation symporter (DAACS) (TC 2.A.23) family.

The protein localises to the cell membrane. It catalyses the reaction L-serine(in) + Na(+)(in) = L-serine(out) + Na(+)(out). The catalysed reaction is L-threonine(in) + Na(+)(in) = L-threonine(out) + Na(+)(out). Involved in the import of serine and threonine into the cell, with the concomitant import of sodium (symport system). In Streptococcus suis (strain 05ZYH33), this protein is Serine/threonine transporter SstT.